The following is a 436-amino-acid chain: tRNA(Ile)-lysidine synthase (436 aa).

An ATP-binding site is contributed by 25-30 (SGGLDS).

This sequence belongs to the tRNA(Ile)-lysidine synthase family.

Its subcellular location is the cytoplasm. The enzyme catalyses cytidine(34) in tRNA(Ile2) + L-lysine + ATP = lysidine(34) in tRNA(Ile2) + AMP + diphosphate + H(+). In terms of biological role, ligates lysine onto the cytidine present at position 34 of the AUA codon-specific tRNA(Ile) that contains the anticodon CAU, in an ATP-dependent manner. Cytidine is converted to lysidine, thus changing the amino acid specificity of the tRNA from methionine to isoleucine. The polypeptide is tRNA(Ile)-lysidine synthase (Serratia proteamaculans (strain 568)).